The sequence spans 508 residues: Protein phosphatase PP2A regulatory subunit B (508 aa).

WD repeat units follow at residues 19 to 58, 81 to 122, 166 to 204, 215 to 255, 274 to 312, and 329 to 370; these read TEAD…KKQS, EIEE…IKLV, AHAY…QSFN, ELTE…LCDS, EITS…KPIK, and ENDA…GNDD. Positions 369-466 are disordered; the sequence is DDKPKFKSAF…MRRRMTSGVG (98 aa). Over residues 396 to 418 the composition is skewed to acidic residues; it reads DDDDDDDDDDDDEEADDEFDEEV. A compositionally biased stretch (basic residues) spans 447 to 461; that stretch reads FKSKKSGQHPMRRRM. A WD 7 repeat occupies 477 to 507; that stretch reads DFKKSILHLSWHPRENSVAIAATNNLYIFST.

Belongs to the phosphatase 2A regulatory subunit B family. As to quaternary structure, PP2A exists in several trimeric forms, all of which consist of a core composed of a catalytic subunit associated with a 65 kDa (PR65) (Subunit A) and a 55 kDa (PR55) (Subunit B) regulatory subunit.

In terms of biological role, phosphatase 2A affects a variety of biological processes in the cell such as transcription, cell cycle progression and cellular morphogenesis, and provides an initial identification of critical substrates for this phosphatase. The regulatory subunit may direct the catalytic subunit to distinct, albeit overlapping, subsets of substrates. The protein is Protein phosphatase PP2A regulatory subunit B (CDC55) of Candida tropicalis (Yeast).